The following is a 296-amino-acid chain: 4-hydroxy-tetrahydrodipicolinate synthase (296 aa).

Thr46 serves as a coordination point for pyruvate. The active-site Proton donor/acceptor is the Tyr134. The active-site Schiff-base intermediate with substrate is Lys162. Ile204 provides a ligand contact to pyruvate.

It belongs to the DapA family. As to quaternary structure, homotetramer; dimer of dimers.

Its subcellular location is the cytoplasm. It catalyses the reaction L-aspartate 4-semialdehyde + pyruvate = (2S,4S)-4-hydroxy-2,3,4,5-tetrahydrodipicolinate + H2O + H(+). Its pathway is amino-acid biosynthesis; L-lysine biosynthesis via DAP pathway; (S)-tetrahydrodipicolinate from L-aspartate: step 3/4. Catalyzes the condensation of (S)-aspartate-beta-semialdehyde [(S)-ASA] and pyruvate to 4-hydroxy-tetrahydrodipicolinate (HTPA). This is 4-hydroxy-tetrahydrodipicolinate synthase from Clostridium novyi (strain NT).